The chain runs to 312 residues: Zinc transporter ZitB (312 aa).

The next 5 helical transmembrane spans lie at 21-41 (LLFA…GGIL), 48-68 (LADA…LLAV), 90-110 (AAFV…WEAI), 123-143 (LMMV…WILH), and 164-184 (LLGS…GWTP).

The protein belongs to the cation diffusion facilitator (CDF) transporter (TC 2.A.4) family. SLC30A subfamily.

It is found in the cell inner membrane. Its function is as follows. Involved in zinc efflux across the cytoplasmic membrane, thus reducing zinc accumulation in the cytoplasm and rendering bacteria more resistant to zinc. It may contribute to zinc homeostasis at low concentrations of zinc. The protein is Zinc transporter ZitB of Salmonella typhimurium (strain LT2 / SGSC1412 / ATCC 700720).